A 340-amino-acid polypeptide reads, in one-letter code: Short-chain dehydrogenase/reductase ffsI (340 aa).

Positions 46, 71, 96, 123, 211, and 215 each coordinate NADP(+). The Proton acceptor role is filled by Tyr-211. The Lowers pKa of active site Tyr role is filled by Lys-215.

This sequence belongs to the short-chain dehydrogenases/reductases (SDR) family.

Its pathway is mycotoxin biosynthesis. Its function is as follows. Short-chain dehydrogenase/reductase; part of the gene cluster that mediates the biosynthesis of the cytotoxic leucine-containing cytochalasans, including aspochalasin C, aspochalasin E, TMC-169, flavichalasine F, aspergillin PZ, aspochalasin M and flavichalasine G. The first step in the pathway is catalyzed by the hybrid PKS-NRPS ffsA that utilizes 8 units of malonyl-CoA to iteratively assemble the octaketide chain before addition of L-leucine by the C-terminal NRPS modules. Because ffsA lacks a designated enoylreductase (ER) domain, the required activity is provided the enoyl reductase fssC. The methyltransferase (MT) domain of ffsA catalyzes the alpha-methylation at C10 and C14 using S-adenosyl-L-methionine as the methyl-donating cosubstrate. Reduction by the hydrolyase ffsE, followed by dehydration and intra-molecular Diels-Alder cyclization by the Diels-Alderase ffsF then yield the required isoindolone-fused macrocycle. A number of oxidative steps catalyzed by the tailoring cytochrome P450 monooxygenase ffsD, the FAD-linked oxidoreductase ffsJ and the short-chain dehydrogenase/reductase ffsI, are further required to afford the final products. This Aspergillus flavipes protein is Short-chain dehydrogenase/reductase ffsI.